Consider the following 347-residue polypeptide: Methylthioribose-1-phosphate isomerase (347 aa).

Substrate is bound by residues 45-47, Arg-88, and Gln-197; that span reads RGA. Residue Asp-238 is the Proton donor of the active site. A substrate-binding site is contributed by 248–249; sequence NK.

Belongs to the eIF-2B alpha/beta/delta subunits family. MtnA subfamily.

The catalysed reaction is 5-(methylsulfanyl)-alpha-D-ribose 1-phosphate = 5-(methylsulfanyl)-D-ribulose 1-phosphate. It participates in amino-acid biosynthesis; L-methionine biosynthesis via salvage pathway; L-methionine from S-methyl-5-thio-alpha-D-ribose 1-phosphate: step 1/6. Functionally, catalyzes the interconversion of methylthioribose-1-phosphate (MTR-1-P) into methylthioribulose-1-phosphate (MTRu-1-P). This chain is Methylthioribose-1-phosphate isomerase, found in Trichormus variabilis (strain ATCC 29413 / PCC 7937) (Anabaena variabilis).